Here is a 304-residue protein sequence, read N- to C-terminus: Small ribosomal subunit biogenesis GTPase RsgA (304 aa).

Residues 70–229 (HNELNRPNIA…IADTPGFSKL (160 aa)) form the CP-type G domain. GTP-binding positions include 119-122 (TKID) and 172-180 (GQTGVGKST). 4 residues coordinate Zn(2+): Cys-253, Cys-259, His-261, and Cys-267.

It belongs to the TRAFAC class YlqF/YawG GTPase family. RsgA subfamily. As to quaternary structure, monomer. Associates with 30S ribosomal subunit, binds 16S rRNA. The cofactor is Zn(2+).

The protein resides in the cytoplasm. One of several proteins that assist in the late maturation steps of the functional core of the 30S ribosomal subunit. Helps release RbfA from mature subunits. May play a role in the assembly of ribosomal proteins into the subunit. Circularly permuted GTPase that catalyzes slow GTP hydrolysis, GTPase activity is stimulated by the 30S ribosomal subunit. The protein is Small ribosomal subunit biogenesis GTPase RsgA of Phytoplasma mali (strain AT).